The sequence spans 50 residues: Omega-conotoxin Bu8 (50 aa).

A signal peptide is located at residue Ala1. The propeptide occupies 2–24; that stretch reads EDSRGTQLHRALRKATKLSESTR. 3 cysteine pairs are disulfide-bonded: Cys25/Cys40, Cys32/Cys44, and Cys39/Cys49. Position 49 is a cysteine amide (Cys49).

This sequence belongs to the conotoxin O1 superfamily. In terms of tissue distribution, expressed by the venom duct.

The protein resides in the secreted. Omega-conotoxins act at presynaptic membranes, they bind and block voltage-gated calcium channels (Cav). This toxin selectively and potently inhibits depolarization-activated rat Cav2.2/CACNA1B currents (IC(50)=89 nM), when coexpressed with alpha-2/delta-1 (CACNA2D1) and beta-3 (CACNB3) subunits. In vivo, is lethal to fish and displays potent analgesic activity in mice pain models of hot plate and acetic acid writhing but has fewer side effects on mouse motor function and lower toxicity in goldfish. Shows higher or similar analgesic activity in the pain models mentioned above compared to MVIIA, and lower side effects. In addition, it blocks Cav2.2/CACNA1B more rapidly than MVIIA and also dissociates more rapidly. This chain is Omega-conotoxin Bu8, found in Conus bullatus (Bubble cone).